Here is a 404-residue protein sequence, read N- to C-terminus: Riboflavin biosynthesis protein RibBA (404 aa).

The DHBP synthase stretch occupies residues 1–204; it reads MEELKLNTIE…IRDLIAYRLK (204 aa). D-ribulose 5-phosphate contacts are provided by residues 30–31, Asp-35, 143–147, and Glu-167; these read RE and RAGHT. Mg(2+) is bound at residue Glu-31. Residue His-146 participates in Mg(2+) binding. The interval 205–404 is GTP cyclohydrolase II; the sequence is QESLVEKGVE…RMGHTLHFNK (200 aa). 255 to 259 contributes to the GTP binding site; it reads RVHSS. Cys-260, Cys-271, and Cys-273 together coordinate Zn(2+). GTP is bound by residues Gln-276, 298-300, and Thr-320; that span reads EGR. Asp-332 acts as the Proton acceptor; for GTP cyclohydrolase activity in catalysis. Residue Arg-334 is the Nucleophile; for GTP cyclohydrolase activity of the active site. GTP-binding residues include Thr-355 and Lys-360.

The protein in the N-terminal section; belongs to the DHBP synthase family. In the C-terminal section; belongs to the GTP cyclohydrolase II family. It depends on Mg(2+) as a cofactor. Mn(2+) is required as a cofactor. Requires Zn(2+) as cofactor.

It catalyses the reaction D-ribulose 5-phosphate = (2S)-2-hydroxy-3-oxobutyl phosphate + formate + H(+). It carries out the reaction GTP + 4 H2O = 2,5-diamino-6-hydroxy-4-(5-phosphoribosylamino)-pyrimidine + formate + 2 phosphate + 3 H(+). Its pathway is cofactor biosynthesis; riboflavin biosynthesis; 2-hydroxy-3-oxobutyl phosphate from D-ribulose 5-phosphate: step 1/1. It functions in the pathway cofactor biosynthesis; riboflavin biosynthesis; 5-amino-6-(D-ribitylamino)uracil from GTP: step 1/4. Catalyzes the conversion of D-ribulose 5-phosphate to formate and 3,4-dihydroxy-2-butanone 4-phosphate. Functionally, catalyzes the conversion of GTP to 2,5-diamino-6-ribosylamino-4(3H)-pyrimidinone 5'-phosphate (DARP), formate and pyrophosphate. The protein is Riboflavin biosynthesis protein RibBA of Phocaeicola vulgatus (strain ATCC 8482 / DSM 1447 / JCM 5826 / CCUG 4940 / NBRC 14291 / NCTC 11154) (Bacteroides vulgatus).